The following is a 160-amino-acid chain: Cytochrome b6-f complex subunit 4 (160 aa).

The next 3 helical transmembrane spans lie at 36–56 (LLYI…GLAV), 95–115 (LLGV…PFLE), and 131–151 (TVFL…TLPI).

Belongs to the cytochrome b family. PetD subfamily. The 4 large subunits of the cytochrome b6-f complex are cytochrome b6, subunit IV (17 kDa polypeptide, petD), cytochrome f and the Rieske protein, while the 4 small subunits are petG, petL, petM and petN. The complex functions as a dimer.

The protein resides in the plastid. Its subcellular location is the chloroplast thylakoid membrane. Its function is as follows. Component of the cytochrome b6-f complex, which mediates electron transfer between photosystem II (PSII) and photosystem I (PSI), cyclic electron flow around PSI, and state transitions. The sequence is that of Cytochrome b6-f complex subunit 4 from Solanum tuberosum (Potato).